Reading from the N-terminus, the 172-residue chain is MNLTHYIASIENYPKEGITFRDISPLMADGKAYSYAIREICQYAADKEIDMIVGPEARGFIIGCPVAVELGIGFAPVRKPGKLPREVVSADYEKEYGLDTLTMHSDAIKPGQRVLIVDDLLATGGTVKATIEMVEKLGGVVAGCAFLIELDGLNGRQALGDIDYKVLMNFPG.

The protein belongs to the purine/pyrimidine phosphoribosyltransferase family. In terms of assembly, homodimer.

The protein resides in the cytoplasm. The catalysed reaction is AMP + diphosphate = 5-phospho-alpha-D-ribose 1-diphosphate + adenine. It participates in purine metabolism; AMP biosynthesis via salvage pathway; AMP from adenine: step 1/1. In terms of biological role, catalyzes a salvage reaction resulting in the formation of AMP, that is energically less costly than de novo synthesis. The protein is Adenine phosphoribosyltransferase of Streptococcus uberis (strain ATCC BAA-854 / 0140J).